The primary structure comprises 389 residues: MLLCDSLSFFQQLAWHVQLLACLQWLGRSQVLICLPLGSSFSVRDLAQLCGVSETTLSRVVRLTATAGFLQEPQPGQIMHTPLSGAFGGQPSLRDATLFLSNRITPSALQMASTLHLGRTESAAESAYNLAFATSRTFRDACRVTPKLHRQWIAYLRNTGDSDDSITEVLTRLDWAHLGRSCIVESGARSTTRARVLSKLYPALRFVVQLSGPDQDAHDTRASLTPVPSIPGIIQLDENYPHISVQTRNLGLAQPVLDAAVYILHLPSLSVANSPSRSIVVKELQAHMDVLSSNPSAVLIATARVLPPPGSVHREVEAMCRVRDFTLMQLTNEHEPEVADFDDLVNAVEAGGAGRLVVADKLRARNNLLVAFVLKYQEVSAPGALPSSF.

The region spanning 13-83 (LAWHVQLLAC…QPGQIMHTPL (71 aa)) is the HTH iclR-type domain. Residues 43 to 62 (VRDLAQLCGVSETTLSRVVR) constitute a DNA-binding region (H-T-H motif).

It localises to the nucleus. Transcriptional coactivator; part of the gene cluster that mediates the biosynthesis of geodin, an intermediate in the biosynthesis of other natural products. With gedR, coregulates the production of geodin. The polypeptide is Geodin cluster transcriptional coactivator gedD (gedD) (Aspergillus terreus (strain NIH 2624 / FGSC A1156)).